Reading from the N-terminus, the 852-residue chain is Envelope glycoprotein gp160 (852 aa).

The N-terminal stretch at 1-24 is a signal peptide; the sequence is MAHVNNYLLVTLLLISIYGYMGKN. At 25–677 the chain is on the extracellular side; the sequence is FVTVFYGIPA…FTSWMAYIRL (653 aa). N37 carries an N-linked (GlcNAc...) asparagine; by host glycan. C44 and C57 are oxidised to a cystine. N70, N114, N148, N195, N205, N237, N247, N270, N276, N287, and N298 each carry an N-linked (GlcNAc...) asparagine; by host glycan. Intrachain disulfides connect C101–C213, C108–C204, C113–C162, and C236–C248. Positions 113–161 are V1; it reads CNKTWSSASKETTTSSASLRSSTQTLLNEDSKCIQNDSCAGIGLEEMID. Residues 162–204 are V2; it reads CQFKMTGLKRDESKQYKDTWYKQDLVCEKGTRSNESKCYIKTC. A V3 region spans residues 303–335; that stretch reads CKRPGNKMVVPIRTVSGILFHSQPINKRPKQAW. Residues C303 and C336 are joined by a disulfide bond. 7 N-linked (GlcNAc...) asparagine; by host glycosylation sites follow: N341, N364, N396, N406, N445, N461, and N464. 2 disulfides stabilise this stretch: C388–C444 and C395–C417. The segment at 395-417 is V4; that stretch reads CNMTFFLNWVENRTGLKRNYASC. Residues 461–467 form a V5 region; sequence NLTNITV. The segment at 510–530 is fusion peptide; the sequence is GVLVLGFLGFLATAGSAMGAA. Positions 573–589 are immunosuppression; that stretch reads LQARVTAIEKYLKDQAQ. N609, N618, and N634 each carry an N-linked (GlcNAc...) asparagine; by host glycan. The stretch at 622–648 forms a coiled coil; sequence QQWERQVRFLDANITKLLEEAQIQQEK. Positions 655–676 are MPER; binding to GalCer; it reads KLNQWDIFSNWFDFTSWMAYIR. A helical membrane pass occupies residues 678–698; that stretch reads GLYIVIGIVVLRIAIYIIQML. At 699–852 the chain is on the cytoplasmic side; the sequence is ARLRKGYRPV…IRQGAELALL (154 aa). The short motif at 705–708 is the YXXV motif; contains endocytosis signal element; the sequence is YRPV. Positions 713–740 are disordered; it reads PSYTQQIPIRKDRGQPANEETEEGGGNN. C771 carries S-palmitoyl cysteine; by host lipidation. The Di-leucine internalization motif signature appears at 851-852; the sequence is LL.

The mature envelope protein (Env) consists of a homotrimer of non-covalently associated gp120-gp41 heterodimers. The resulting complex protrudes from the virus surface as a spike. There seems to be as few as 10 spikes on the average virion. Interacts with human CD4, CCR5 and CXCR4, to form a P4HB/PDI-CD4-CXCR4-gp120 complex. Gp120 also interacts with the C-type lectins CD209/DC-SIGN and CLEC4M/DC-SIGNR (collectively referred to as DC-SIGN(R)). Gp120 and gp41 interact with GalCer. As to quaternary structure, the mature envelope protein (Env) consists of a homotrimer of non-covalently associated gp120-gp41 heterodimers. The resulting complex protrudes from the virus surface as a spike. There seems to be as few as 10 spikes on the average virion. In terms of processing, specific enzymatic cleavages in vivo yield mature proteins. Envelope glycoproteins are synthesized as an inactive precursor that is heavily N-glycosylated and processed likely by host cell furin in the Golgi to yield the mature SU and TM proteins. The cleavage site between SU and TM requires the minimal sequence [KR]-X-[KR]-R. Palmitoylation of the transmembrane protein and of Env polyprotein (prior to its proteolytic cleavage) is essential for their association with host cell membrane lipid rafts. Palmitoylation is therefore required for envelope trafficking to classical lipid rafts, but not for viral replication.

The protein resides in the virion membrane. It is found in the host cell membrane. It localises to the host endosome membrane. In terms of biological role, the surface protein gp120 (SU) attaches the virus to the host lymphoid cell by binding to the primary receptor CD4. This interaction induces a structural rearrangement creating a high affinity binding site for a chemokine coreceptor like CXCR4 and/or CCR5. This peculiar 2 stage receptor-interaction strategy allows gp120 to maintain the highly conserved coreceptor-binding site in a cryptic conformation, protected from neutralizing antibodies. Since CD4 also displays a binding site for the disulfide-isomerase P4HB/PDI, a P4HB/PDI-CD4-CXCR4-gp120 complex may form. In that complex, P4HB/PDI could reach and reduce gp120 disulfide bonds, causing major conformational changes in gp120. TXN, another PDI family member could also be involved in disulfide rearrangements in Env during fusion. These changes are transmitted to the transmembrane protein gp41 and are thought to activate its fusogenic potential by unmasking its fusion peptide. Its function is as follows. The surface protein gp120 is a ligand for CD209/DC-SIGN and CLEC4M/DC-SIGNR, which are respectively found on dendritic cells (DCs), and on endothelial cells of liver sinusoids and lymph node sinuses. These interactions allow capture of viral particles at mucosal surfaces by these cells and subsequent transmission to permissive cells. DCs are professional antigen presenting cells, critical for host immunity by inducing specific immune responses against a broad variety of pathogens. They act as sentinels in various tissues where they take up antigen, process it, and present it to T-cells following migration to lymphoid organs. HIV subverts the migration properties of dendritic cells to gain access to CD4+ T-cells in lymph nodes. Virus transmission to permissive T-cells occurs either in trans (without DCs infection, through viral capture and transmission), or in cis (following DCs productive infection, through the usual CD4-gp120 interaction), thereby inducing a robust infection. In trans infection, bound virions remain infectious over days and it is proposed that they are not degraded, but protected in non-lysosomal acidic organelles within the DCs close to the cell membrane thus contributing to the viral infectious potential during DCs' migration from the periphery to the lymphoid tissues. On arrival at lymphoid tissues, intact virions recycle back to DCs' cell surface allowing virus transmission to CD4+ T-cells. Virion capture also seems to lead to MHC-II-restricted viral antigen presentation, and probably to the activation of HIV-specific CD4+ cells. Functionally, the transmembrane protein gp41 (TM) acts as a class I viral fusion protein. Under the current model, the protein has at least 3 conformational states: pre-fusion native state, pre-hairpin intermediate state, and post-fusion hairpin state. During fusion of viral and target intracellular membranes, the coiled coil regions (heptad repeats) assume a trimer-of-hairpins structure, positioning the fusion peptide in close proximity to the C-terminal region of the ectodomain. The formation of this structure appears to drive apposition and subsequent fusion of viral and target cell membranes. Complete fusion occurs in host cell endosomes and is dynamin-dependent, however some lipid transfer might occur at the plasma membrane. The virus undergoes clathrin-dependent internalization long before endosomal fusion, thus minimizing the surface exposure of conserved viral epitopes during fusion and reducing the efficacy of inhibitors targeting these epitopes. Membranes fusion leads to delivery of the nucleocapsid into the cytoplasm. The envelope glycoprotein gp160 precursor down-modulates cell surface CD4 antigen by interacting with it in the endoplasmic reticulum and blocking its transport to the cell surface. In terms of biological role, the gp120-gp41 heterodimer seems to contribute to T-cell depletion during HIV-1 infection. The envelope glycoproteins expressed on the surface of infected cells induce apoptosis through an interaction with uninfected cells expressing the receptor (CD4) and the coreceptors CXCR4 or CCR5. This type of bystander killing may be obtained by at least three distinct mechanisms. First, the interaction between the 2 cells can induce cellular fusion followed by nuclear fusion within the syncytium. Syncytia are condemned to die from apoptosis. Second, the 2 interacting cells may not fuse entirely and simply exchange plasma membrane lipids, after a sort of hemifusion process, followed by rapid death. Third, it is possible that virus-infected cells, on the point of undergoing apoptosis, fuse with CD4-expressing cells, in which case apoptosis is rapidly transmitted from one cell to the other and thus occurs in a sort of contagious fashion. Its function is as follows. The gp120-gp41 heterodimer allows rapid transcytosis of the virus through CD4 negative cells such as simple epithelial monolayers of the intestinal, rectal and endocervical epithelial barriers. Both gp120 and gp41 specifically recognize glycosphingolipids galactosyl-ceramide (GalCer) or 3' sulfo-galactosyl-ceramide (GalS) present in the lipid rafts structures of epithelial cells. Binding to these alternative receptors allows the rapid transcytosis of the virus through the epithelial cells. This transcytotic vesicle-mediated transport of virions from the apical side to the basolateral side of the epithelial cells does not involve infection of the cells themselves. The sequence is that of Envelope glycoprotein gp160 (env) from Human immunodeficiency virus type 2 subtype B (isolate EHO) (HIV-2).